The sequence spans 502 residues: Cytochrome P450 3A5 (502 aa).

Position 441 (Cys441) interacts with heme.

The protein belongs to the cytochrome P450 family. Heme is required as a cofactor.

The protein resides in the endoplasmic reticulum membrane. Its subcellular location is the microsome membrane. The catalysed reaction is an organic molecule + reduced [NADPH--hemoprotein reductase] + O2 = an alcohol + oxidized [NADPH--hemoprotein reductase] + H2O + H(+). It carries out the reaction 17beta-estradiol + reduced [NADPH--hemoprotein reductase] + O2 = 2-hydroxy-17beta-estradiol + oxidized [NADPH--hemoprotein reductase] + H2O + H(+). The enzyme catalyses 17beta-estradiol + reduced [NADPH--hemoprotein reductase] + O2 = 4-hydroxy-17beta-estradiol + oxidized [NADPH--hemoprotein reductase] + H2O + H(+). It catalyses the reaction estrone + reduced [NADPH--hemoprotein reductase] + O2 = 2-hydroxyestrone + oxidized [NADPH--hemoprotein reductase] + H2O + H(+). The catalysed reaction is estrone + reduced [NADPH--hemoprotein reductase] + O2 = 4-hydroxyestrone + oxidized [NADPH--hemoprotein reductase] + H2O + H(+). It carries out the reaction testosterone + reduced [NADPH--hemoprotein reductase] + O2 = 6beta,17beta-dihydroxyandrost-4-en-3-one + oxidized [NADPH--hemoprotein reductase] + H2O + H(+). The enzyme catalyses androst-4-ene-3,17-dione + reduced [NADPH--hemoprotein reductase] + O2 = 6beta-hydroxyandrost-4-ene-3,17-dione + oxidized [NADPH--hemoprotein reductase] + H2O + H(+). It catalyses the reaction progesterone + reduced [NADPH--hemoprotein reductase] + O2 = 6beta-hydroxyprogesterone + oxidized [NADPH--hemoprotein reductase] + H2O + H(+). The catalysed reaction is all-trans-retinol + reduced [NADPH--hemoprotein reductase] + O2 = all-trans-retinal + oxidized [NADPH--hemoprotein reductase] + 2 H2O + H(+). It carries out the reaction all-trans-retinoate + reduced [NADPH--hemoprotein reductase] + O2 = all-trans-4-hydroxyretinoate + oxidized [NADPH--hemoprotein reductase] + H2O + H(+). The protein operates within steroid hormone biosynthesis. It functions in the pathway cofactor metabolism; retinol metabolism. A cytochrome P450 monooxygenase involved in the metabolism of steroid hormones and vitamins. Mechanistically, uses molecular oxygen inserting one oxygen atom into a substrate, and reducing the second into a water molecule, with two electrons provided by NADPH via cytochrome P450 reductase (NADPH--hemoprotein reductase). Catalyzes the hydroxylation of carbon-hydrogen bonds. Exhibits high catalytic activity for the formation of catechol estrogens from 17beta-estradiol (E2) and estrone (E1), namely 2-hydroxy E1 and E2. Catalyzes 6beta-hydroxylation of the steroid hormones testosterone, progesterone, and androstenedione. Catalyzes the oxidative conversion of all-trans-retinol to all-trans-retinal, a rate-limiting step for the biosynthesis of all-trans-retinoic acid (atRA). Further metabolizes all trans-retinoic acid (atRA) to 4-hydroxyretinoate and may play a role in hepatic atRA clearance. Also involved in the oxidative metabolism of xenobiotics, including calcium channel blocking drug nifedipine and immunosuppressive drug cyclosporine. This is Cytochrome P450 3A5 from Homo sapiens (Human).